Reading from the N-terminus, the 972-residue chain is Nuclear factor NF-kappa-B p105 subunit (972 aa).

The RHD domain occupies 39-246; sequence ADGPYLQILE…DAIYDSKAPN (208 aa). Position 61 is an S-nitrosocysteine; alternate (cysteine 61). Cysteine 61 carries the S-(15-deoxy-Delta12,14-prostaglandin J2-9-yl)cysteine; alternate lipid modification. Lysine 325 participates in a covalent cross-link: Glycyl lysine isopeptide (Lys-Gly) (interchain with G-Cter in SUMO2). The residue at position 337 (serine 337) is a Phosphoserine; by PKA. A Nuclear localization signal motif is present at residues 360–365; that stretch reads QRKRQK. The tract at residues 372–394 is GRR; sequence DSFGGGSGAGAGGGGMFGSGGGG. The interval 425 to 473 is disordered; it reads KSNAGMKHGTIDTPSKNDSEGCGKNVDREAVNLSGKVTEPTEQDKESSM. Residues lysine 431 and lysine 440 each carry the N6-acetyllysine; by EP300 modification. The interaction with CFLAR stretch occupies residues 435 to 972; sequence IDTPSKNDSE…GQEGPIEGKI (538 aa). Positions 439 to 454 are enriched in basic and acidic residues; that stretch reads SKNDSEGCGKNVDREA. ANK repeat units lie at residues 539–568, 578–607, 611–640, 647–676, 681–711, and 715–744; these read NGDS…GLIS, LYQT…DLSL, LGNS…AALL, EGLN…DVNA, SGRT…HVDS, and DGTT…DPLV. The tract at residues 647 to 681 is essential for interaction with HIF1AN; it reads EGLNAIHIAVMSNSMPCLLLLVAAGADVNAQERKS. Asparagine 675 carries the post-translational modification (3S)-3-hydroxyasparagine; by HIF1AN. Position 756 is a phosphoserine (serine 756). Residues 768 to 798 form an ANK 7 repeat; it reads PGTTPLDMATNWQVFDILNGKPYEPEFTSDD. Residues 814 to 889 enclose the Death domain; it reads LQLYKLLEIP…EAIEVIQAAF (76 aa). The segment at 894-926 is disordered; the sequence is TAAPSPGKGAPQTLSLPLSSASTRSPVDEVRDD. A compositionally biased stretch (polar residues) spans 905 to 918; the sequence is QTLSLPLSSASTRS. Phosphoserine; by GSK3-beta; in vitro occurs at positions 908 and 912. At serine 927 the chain carries Phosphoserine. 2 positions are modified to phosphoserine; by IKKB: serine 931 and serine 936. Serine 941 is subject to Phosphoserine. Threonine 947 carries the post-translational modification Phosphothreonine.

In terms of assembly, component of the NF-kappa-B p65-p50 complex. Homodimer; component of the NF-kappa-B p50-p50 complex. Component of the NF-kappa-B p105-p50 complex. Component of the NF-kappa-B p50-c-Rel complex. Component of a complex consisting of the NF-kappa-B p50-p50 homodimer and BCL3. Also interacts with MAP3K8. NF-kappa-B p50 subunit interacts with NCOA3 coactivator, which may coactivate NF-kappa-B dependent expression via its histone acetyltransferase activity. Interacts with TSC22D3; this interaction prevents nuclear translocation and DNA-binding. Interacts with SPAG9 and UNC5CL. NFKB1/p105 interacts with CFLAR; the interaction inhibits p105 processing into p50. NFKB1/p105 forms a ternary complex with MAP3K8 and TNIP2. Interacts with GSK3B; the interaction prevents processing of p105 to p50. NFKB1/p50 interacts with NFKBIE. NFKB1/p50 interacts with NFKBIZ. Nuclear factor NF-kappa-B p50 subunit interacts with NFKBID. Directly interacts with MEN1. Interacts with HIF1AN. Interacts with FEM1A; interaction is direct. Post-translationally, generation of the NF-kappa-B p50 (Nuclear factor NF-kappa-B p50 subunit) transcription factor takes place both cotranslationally and post-translationally via non-mutually exclusive mechanisms. A cotranslational processing allows the production of both p50 and p105 (Nuclear factor NF-kappa-B p105 subunit) from a single NFKB1 mRNA. While translation occurs, the particular unfolded structure after the GRR repeat region acts as a substrate for the proteasome, promoting degradation of the C-terminus. The GRR acts as a proteasomal 'stop signal', protecting the region upstream of the GRR from degradation and promoting generation of p50. It is unclear if limited proteasome degradation during cotranslational processing depends on ubiquitination. NF-kappa-B p50 is also generated post-translationally following ubiquitination by the KPC complex, leading to limited processing by the proteasome downstream of the GRR region, thereby generating p50. In terms of processing, phosphorylation at the C-terminus by IKBKB/IKKB acts as a signal for ubiquitination and promotes either complete degradation or processing to generate the NF-kappa-B p50 (Nuclear factor NF-kappa-B p50 subunit). Phosphorylation at Ser-908 and Ser-912 primes p105 for proteolytic processing in response to TNF-alpha stimulation. Phosphorylation at Ser-927, Ser-931 and Ser-936 are required for BTRC/BTRCP-mediated ubiquitination and proteolysis. Phosphorylation at Ser-931 is also required for ubiquitination by the KPC complex and limited processing to generate NF-kappa-B p50 (Nuclear factor NF-kappa-B p50 subunit). Polyubiquitinated at multiple Lys residues in the C-terminus. Polyubiquitinated by the SCF(FBXW11) and SCF(BTRC) complexes following phosphorylation at Ser-923, Ser-927, Ser-931 and Ser-936, leading to its complete degradation. In contrast, polyubiquitination by the KPC complex following phosphorylation at Ser-931 leads to limited proteosomal processing and generation of the active NF-kappa-B p50 (Nuclear factor NF-kappa-B p50 subunit). Post-translationally, S-nitrosylation of Cys-61 affects DNA binding. In terms of processing, the covalent modification of cysteine by 15-deoxy-Delta12,14-prostaglandin-J2 is autocatalytic and reversible. It may occur as an alternative to other cysteine modifications, such as S-nitrosylation and S-palmitoylation.

Its subcellular location is the cytoplasm. The protein localises to the nucleus. In terms of biological role, NF-kappa-B is a pleiotropic transcription factor present in almost all cell types and is the endpoint of a series of signal transduction events that are initiated by a vast array of stimuli related to many biological processes such as inflammation, immunity, differentiation, cell growth, tumorigenesis and apoptosis. NF-kappa-B is a homo- or heterodimeric complex formed by the Rel-like domain-containing proteins RELA/p65, RELB, NFKB1/p105, NFKB1/p50, REL and NFKB2/p52 and the heterodimeric p65-p50 complex appears to be most abundant one. The dimers bind at kappa-B sites in the DNA of their target genes and the individual dimers have distinct preferences for different kappa-B sites that they can bind with distinguishable affinity and specificity. Different dimer combinations act as transcriptional activators or repressors, respectively. NF-kappa-B is controlled by various mechanisms of post-translational modification and subcellular compartmentalization as well as by interactions with other cofactors or corepressors. NF-kappa-B complexes are held in the cytoplasm in an inactive state complexed with members of the NF-kappa-B inhibitor (I-kappa-B) family. In a conventional activation pathway, I-kappa-B is phosphorylated by I-kappa-B kinases (IKKs) in response to different activators, subsequently degraded thus liberating the active NF-kappa-B complex which translocates to the nucleus. NF-kappa-B heterodimeric p65-p50 and RelB-p50 complexes are transcriptional activators. The NF-kappa-B p50-p50 homodimer is a transcriptional repressor, but can act as a transcriptional activator when associated with BCL3. NFKB1 appears to have dual functions such as cytoplasmic retention of attached NF-kappa-B proteins by p105 and generation of p50 by a cotranslational processing. The proteasome-mediated process ensures the production of both p50 and p105 and preserves their independent function, although processing of NFKB1/p105 also appears to occur post-translationally. p50 binds to the kappa-B consensus sequence 5'-GGRNNYYCC-3', located in the enhancer region of genes involved in immune response and acute phase reactions. In a complex with MAP3K8, NFKB1/p105 represses MAP3K8-induced MAPK signaling; active MAP3K8 is released by proteasome-dependent degradation of NFKB1/p105. P105 is the precursor of the active p50 subunit (Nuclear factor NF-kappa-B p50 subunit) of the nuclear factor NF-kappa-B. Acts as a cytoplasmic retention of attached NF-kappa-B proteins by p105. Its function is as follows. Constitutes the active form, which associates with RELA/p65 to form the NF-kappa-B p65-p50 complex to form a transcription factor. Together with RELA/p65, binds to the kappa-B consensus sequence 5'-GGRNNYYCC-3', located in the enhancer region of genes involved in immune response and acute phase reactions. This chain is Nuclear factor NF-kappa-B p105 subunit (NFKB1), found in Canis lupus familiaris (Dog).